The following is a 551-amino-acid chain: Monocarboxylic acid transporter (551 aa).

13 consecutive transmembrane segments (helical) span residues 18–38 (NPIL…TVVL), 63–83 (GLAI…VGAI), 90–110 (GFLY…LVAE), 144–164 (VTLF…SVLL), 171–191 (WQAV…LLGG), 203–223 (AVLL…KVSG), 267–287 (LDFI…PHVL), 307–327 (IVLI…AAAL), 355–375 (IFMA…VAGL), 411–431 (VVIG…NVAF), 432–452 (LVAL…LYSL), 463–483 (VAAI…SPAV), and 503–523 (NPGL…TLVG).

This sequence belongs to the sodium:solute symporter (SSF) (TC 2.A.21) family.

It localises to the cell membrane. Its function is as follows. Acts as a secondary carrier for acetate, propionate and pyruvate. Has high affinity for acetate and propionate and lower affinity for pyruvate. Driven by the electrochemical proton potential. This Corynebacterium glutamicum (strain ATCC 13032 / DSM 20300 / JCM 1318 / BCRC 11384 / CCUG 27702 / LMG 3730 / NBRC 12168 / NCIMB 10025 / NRRL B-2784 / 534) protein is Monocarboxylic acid transporter.